The chain runs to 392 residues: GPI alpha-1,4-mannosyltransferase I, catalytic subunit (392 aa).

At 1–4 (MEAR) the chain is on the cytoplasmic side. The helical transmembrane segment at 5 to 25 (VCVLFGAAALLRLLLLCVGVY) threads the bilayer. The Lumenal portion of the chain corresponds to 26–65 (QDQTLKLKYTDVDYHVFTDAARFITQGESPYRRSTFRYTP). The chain crosses the membrane as a helical span at residues 66-86 (LLALLLVPNVYLSLLFGKLLF). At 87–125 (GFCDLLSGLLMFRLLVLRGASHGSACVSCGLWLLNPLPM) the chain is on the cytoplasmic side. The chain crosses the membrane as a helical span at residues 126 to 148 (AVSTRGNAESVLAVLVLSTLLCL). Over 149–156 (QLRKHTTA) the chain is Lumenal. Residues 157 to 177 (ALLFGLSVHMKIYPVTYALPI) traverse the membrane as a helical segment. At 178 to 198 (ALALTAAPARGRGVLLRFFSP) the chain is on the cytoplasmic side. A helical membrane pass occupies residues 199–219 (ALLRFAAVSAAVFLSLGLIFY). Topologically, residues 220 to 261 (CRYGWEFLQEAYLYHLTRRDLRHNFSPFFYLQYVCAERCWSS) are lumenal. Residues 262-282 (GLLPLLLLPQLLLLLLASAAF) form a helical membrane-spanning segment. Residues 283 to 302 (SSDLPFCCFLHTAVFVSFNR) are Cytoplasmic-facing. A helical transmembrane segment spans residues 303–323 (VCTSQYFLWYLCLLPVVLPRL). Residues 324–330 (RLRLGRG) are Lumenal-facing. A helical transmembrane segment spans residues 331 to 351 (LLLLLLWLLLQGLWLAPAYLL). The Cytoplasmic portion of the chain corresponds to 352–360 (EFQGWNSFS). Residues 361-381 (WIWAASLLFLLTNTFILAQII) traverse the membrane as a helical segment. The Lumenal segment spans residues 382-392 (QHYRPHDRKAD).

The protein belongs to the PIGM family. In terms of assembly, part of the glycosylphosphatidylinositol-mannosyltransferase I complex that is composed of PIGM and PIGX.

It is found in the endoplasmic reticulum membrane. Its pathway is glycolipid biosynthesis; glycosylphosphatidylinositol-anchor biosynthesis. Catalytic subunit of the glycosylphosphatidylinositol-mannosyltransferase I complex which catalyzes the transfer of the first mannose, via an alpha-1,4 bond from a dolichol-phosphate-mannose (Dol-P-Man) to the glucosaminyl acyl phosphatidylinositol (GlcN-(acyl)PI) intermediate to generate alpha-D-Man-(1-&gt;4)-alpha-D-GlcN-(1-&gt;6)-(1-radyl,2-acyl-sn-glycero-3-phospho)-2-acyl-inositol and participates in the sixth step of the glycosylphosphatidylinositol-anchor biosynthesis. The polypeptide is GPI alpha-1,4-mannosyltransferase I, catalytic subunit (Danio rerio (Zebrafish)).